The following is a 695-amino-acid chain: Segment polarity protein dishevelled homolog DVL-1 (695 aa).

In terms of domain architecture, DIX spans 1 to 85 (MAETKIIYHM…RVVSWLVLAE (85 aa)). Positions 89–237 (SDAGSQGTDS…LRQADRASSF (149 aa)) are disordered. Basic residues predominate over residues 142 to 151 (SHRRERARRR). A compositionally biased stretch (basic and acidic residues) spans 152–171 (NREEAARTNGHPRGDRRRDV). The span at 176 to 192 (DSASTALSSELESSSFV) shows a compositional bias: low complexity. Position 194 is a phosphoserine (S194). Over residues 200-214 (TSRLSSSTEQSTSSR) the composition is skewed to low complexity. Over residues 215–228 (LIRKHKRRRRKQRL) the composition is skewed to basic residues. One can recognise a PDZ domain in the interval 251 to 323 (TVTLNMERHH…NDDAVRVLRE (73 aa)). Residues 425–499 (PDSGLEIRDR…SEQCYYVFGD (75 aa)) form the DEP domain. The interval 543-667 (PGPPPCFPPA…PGGPPVRELA (125 aa)) is disordered. The span at 551–580 (PAYQDPGFSYGSGSTGSQQSEGSKSSGSTR) shows a compositional bias: low complexity. The span at 625-636 (SRGSSPRSQASA) shows a compositional bias: polar residues.

Belongs to the DSH family. Interacts with CXXC4. Interacts (via PDZ domain) with NXN. Interacts with BRD7 and INVS. Interacts (via PDZ domain) with VANGL1 and VANGL2 (via C-terminus). Interacts with ARRB1; the interaction is enhanced by phosphorylation of DVL1. Interacts with CYLD. Interacts (via PDZ domain) with RYK. Self-associates (via DIX domain) and forms higher homooligomers. Interacts (via PDZ domain) with DACT1 and FZD7, where DACT1 and FZD7 compete for the same binding site. Interacts (via DEP domain) with MUSK; the interaction is direct and mediates the formation a DVL1, MUSK and PAK1 ternary complex involved in AChR clustering. Interacts (via PDZ domain) with TMEM88. Interacts with DCDC2. Interacts with FOXK2. Interacts with PKD1 (via extracellular domain). Interacts (via PDZ domain) with CCDC88C/DAPLE; competes with CCDC88C for binding to frizzled receptor FZD7 and dissociates from CCDC88C following initiation of non-canonical Wnt signaling when CCDC88C displaces DVL1 from ligand-activated FZD7. Ubiquitinated; undergoes both 'Lys-48'-linked ubiquitination, leading to its subsequent degradation by the ubiquitin-proteasome pathway, and 'Lys-63'-linked ubiquitination. The interaction with INVS is required for ubiquitination. Deubiquitinated by CYLD, which acts on 'Lys-63'-linked ubiquitin chains.

It localises to the cell membrane. Its subcellular location is the cytoplasm. It is found in the cytosol. The protein resides in the cytoplasmic vesicle. In terms of biological role, participates in Wnt signaling by binding to the cytoplasmic C-terminus of frizzled family members and transducing the Wnt signal to down-stream effectors. Plays a role both in canonical and non-canonical Wnt signaling. Plays a role in the signal transduction pathways mediated by multiple Wnt genes. Required for LEF1 activation upon WNT1 and WNT3A signaling. DVL1 and PAK1 form a ternary complex with MUSK which is important for MUSK-dependent regulation of AChR clustering during the formation of the neuromuscular junction (NMJ). The protein is Segment polarity protein dishevelled homolog DVL-1 (DVL1) of Homo sapiens (Human).